Reading from the N-terminus, the 931-residue chain is Isoleucine--tRNA ligase (931 aa).

A 'HIGH' region motif is present at residues 58–68 (PYANGHLHCGH). Residue Glu-559 coordinates L-isoleucyl-5'-AMP. A 'KMSKS' region motif is present at residues 600-604 (KLSKS). Lys-603 lines the ATP pocket. Positions 894, 897, 914, and 917 each coordinate Zn(2+).

The protein belongs to the class-I aminoacyl-tRNA synthetase family. IleS type 1 subfamily. As to quaternary structure, monomer. Zn(2+) serves as cofactor.

It is found in the cytoplasm. It carries out the reaction tRNA(Ile) + L-isoleucine + ATP = L-isoleucyl-tRNA(Ile) + AMP + diphosphate. Functionally, catalyzes the attachment of isoleucine to tRNA(Ile). As IleRS can inadvertently accommodate and process structurally similar amino acids such as valine, to avoid such errors it has two additional distinct tRNA(Ile)-dependent editing activities. One activity is designated as 'pretransfer' editing and involves the hydrolysis of activated Val-AMP. The other activity is designated 'posttransfer' editing and involves deacylation of mischarged Val-tRNA(Ile). This is Isoleucine--tRNA ligase from Legionella pneumophila (strain Corby).